We begin with the raw amino-acid sequence, 109 residues long: Cell division suppressor protein YneA (109 aa).

A LysM domain is found at 39–90 (SEVDVNEGDSIWALADQYAAKSDMAKADFVSWVEKENNLTDGHVKAGDYVVI).

It belongs to the YneA family.

The protein localises to the cytoplasm. Its function is as follows. Inhibits cell division during the SOS response. Affects a later stage of the cell division protein assembly, after the assembly of the Z ring, by probably suppressing recruitment of FtsL and/or DivIC to the division machinery. The sequence is that of Cell division suppressor protein YneA from Listeria innocua serovar 6a (strain ATCC BAA-680 / CLIP 11262).